Here is a 1366-residue protein sequence, read N- to C-terminus: DNA-directed RNA polymerase subunit beta' (1366 aa).

A compositionally biased stretch (basic residues) spans 1–20 (MTSSKPKKTSRVRKTTKNSK). The tract at residues 1–37 (MTSSKPKKTSRVRKTTKNSKKNNPVTMPVLPKTPPSF) is disordered. 4 residues coordinate Zn(2+): Cys248, Cys315, Cys322, and Cys325. The tract at residues 1292 to 1366 (TVDMPQSPAV…LQEEGLLSDE (75 aa)) is disordered. Residues 1354 to 1366 (LEGLQEEGLLSDE) show a composition bias toward low complexity.

The protein belongs to the RNA polymerase beta' chain family. RpoC2 subfamily. In terms of assembly, in cyanobacteria the RNAP catalytic core is composed of 2 alpha, 1 beta, 1 beta', 1 gamma and 1 omega subunit. When a sigma factor is associated with the core the holoenzyme is formed, which can initiate transcription. The cofactor is Zn(2+).

It catalyses the reaction RNA(n) + a ribonucleoside 5'-triphosphate = RNA(n+1) + diphosphate. Functionally, DNA-dependent RNA polymerase catalyzes the transcription of DNA into RNA using the four ribonucleoside triphosphates as substrates. This chain is DNA-directed RNA polymerase subunit beta', found in Prochlorococcus marinus (strain MIT 9215).